A 37-amino-acid chain; its full sequence is Hemextin B (37 aa).

In terms of assembly, heterotetramer composed of 2 hemextin A and 2 hemextin B chains; non-covalently linked. Does not exist as a complex in the crude venom. Post-translationally, may contain several disulfide bonds. Expressed by the venom gland.

The protein resides in the secreted. In terms of biological role, hemextin B (monomer): does not show anticoagulant activity. Seems only to synergitically enhance hemextin A activity. Its function is as follows. Hemextin AB complex: specifically inhibits the activation of FX (F10) by the TF-FVIIa complex (extrinsic tenase complex (ETC)) (IC(50)= 100 nM, Ki=50 nM) by non-competitively inhibiting the enzymatic activity of FVIIa. In Hemachatus haemachatus (Rinkhals), this protein is Hemextin B.